The chain runs to 123 residues: Cholecystokinin (123 aa).

A signal peptide spans 1 to 19 (MNAGICVCVLLAALSTSSC). Positions 20 to 103 (LSLPAVSEDG…MGNNHRIKDR (84 aa)) are excised as a propeptide. The tract at residues 43–67 (HTRAAPSSGQLSLLSKAEDDEEPRS) is disordered. Position 105 is a sulfotyrosine (Tyr105). Phe111 carries the post-translational modification Phenylalanine amide. Positions 115 to 123 (SAEEYEYSS) are excised as a propeptide. Tyr119 and Tyr121 each carry sulfotyrosine.

This sequence belongs to the gastrin/cholecystokinin family. The precursor is cleaved by proteases to produce a number of active cholecystokinins. In terms of tissue distribution, expressed in the ovary, kidney, gill, gastrointestinal tract and pituitary. Differentially expressed in the brain in the optic tectum-thalamus, hypothalamus, telencephalon, olfactory bulb and tract, preoptic region and posterior brain region. Expression is strongest in the hypothalamus, where localization is to the posterior ventrolateral region. Expression in the brain is transiently increased 2 hours after feeding. Abundant in the sensory layers of the vagal lobe and along the border of the sensory region of the lobe and the deep fiber laye. Also present in the facial lobe and throughout the glossopharyngeal lobe.

Its subcellular location is the secreted. In terms of biological role, this peptide hormone induces gall bladder contraction and the release of pancreatic enzymes in the gut. Induces the secretion of gonadotropin and growth hormone from the pituitary. Suppresses food intake and decreases the expression of preprosomatostatin genes in the forebrain. In Carassius auratus (Goldfish), this protein is Cholecystokinin (cck).